The sequence spans 250 residues: Tetrahydromethanopterin S-methyltransferase subunit D (250 aa).

6 helical membrane-spanning segments follow: residues 9-29, 47-67, 86-106, 144-164, 184-204, and 230-250; these read IIWM…VHFV, GTVQ…GFMM, IMIA…VGVV, IIGG…LIEV, LVAV…VIPS, and LVAS…LGGI.

This sequence belongs to the MtrD family. As to quaternary structure, the complex is composed of 8 subunits; MtrA, MtrB, MtrC, MtrD, MtrE, MtrF, MtrG and MtrH.

Its subcellular location is the cell membrane. It carries out the reaction 5-methyl-5,6,7,8-tetrahydromethanopterin + coenzyme M + 2 Na(+)(in) = 5,6,7,8-tetrahydromethanopterin + methyl-coenzyme M + 2 Na(+)(out). The protein operates within one-carbon metabolism; methanogenesis from CO(2); methyl-coenzyme M from 5,10-methylene-5,6,7,8-tetrahydromethanopterin: step 2/2. Part of a complex that catalyzes the formation of methyl-coenzyme M and tetrahydromethanopterin from coenzyme M and methyl-tetrahydromethanopterin. This is an energy-conserving, sodium-ion translocating step. The sequence is that of Tetrahydromethanopterin S-methyltransferase subunit D from Methanosarcina barkeri (strain Fusaro / DSM 804).